A 381-amino-acid chain; its full sequence is Probable tRNA sulfurtransferase (381 aa).

The 109-residue stretch at 55-163 folds into the THUMP domain; the sequence is GECLENLNKV…DDEAFIYHEK (109 aa). ATP is bound by residues 181 to 182, Lys265, Gly287, and Gln296; that span reads LV.

It belongs to the ThiI family.

The protein resides in the cytoplasm. The enzyme catalyses [ThiI sulfur-carrier protein]-S-sulfanyl-L-cysteine + a uridine in tRNA + 2 reduced [2Fe-2S]-[ferredoxin] + ATP + H(+) = [ThiI sulfur-carrier protein]-L-cysteine + a 4-thiouridine in tRNA + 2 oxidized [2Fe-2S]-[ferredoxin] + AMP + diphosphate. It carries out the reaction [ThiS sulfur-carrier protein]-C-terminal Gly-Gly-AMP + S-sulfanyl-L-cysteinyl-[cysteine desulfurase] + AH2 = [ThiS sulfur-carrier protein]-C-terminal-Gly-aminoethanethioate + L-cysteinyl-[cysteine desulfurase] + A + AMP + 2 H(+). Its pathway is cofactor biosynthesis; thiamine diphosphate biosynthesis. Its function is as follows. Catalyzes the ATP-dependent transfer of a sulfur to tRNA to produce 4-thiouridine in position 8 of tRNAs, which functions as a near-UV photosensor. Also catalyzes the transfer of sulfur to the sulfur carrier protein ThiS, forming ThiS-thiocarboxylate. This is a step in the synthesis of thiazole, in the thiamine biosynthesis pathway. The sulfur is donated as persulfide by IscS. This is Probable tRNA sulfurtransferase from Methanobrevibacter smithii (strain ATCC 35061 / DSM 861 / OCM 144 / PS).